The sequence spans 313 residues: LUC7-related splicing factor homolog (313 aa).

The disordered stretch occupies residues 237 to 313 (RKEREEKLGS…RDRRDRDRRY (77 aa)).

It belongs to the Luc7 family.

The protein is LUC7-related splicing factor homolog of Caenorhabditis elegans.